A 718-amino-acid polypeptide reads, in one-letter code: Ubiquitin homeostasis protein lub1 (718 aa).

WD repeat units lie at residues 12–50 (GHKQ…WTPH), 54–98 (NHEG…PSYY), 101–139 (GHES…YVLK), 140–178 (GHQS…KSIL), 180–217 (HNDC…YELH), 218–257 (GHTS…QCIT), and 259–296 (PTTS…VAPT). A PFU domain is found at 353–448 (QWSQKENEWK…QGHSLESKKE (96 aa)). Residues 462 to 717 (TIFPVSQLLF…VDAEKQILSL (256 aa)) form the PUL domain.

As to quaternary structure, interacts with cdc48.

It localises to the nucleus. The protein localises to the cytoplasm. Its function is as follows. Acts as a negative regulator of vacuole-dependent ubiquitin degradation. The protein is Ubiquitin homeostasis protein lub1 (lub1) of Schizosaccharomyces pombe (strain 972 / ATCC 24843) (Fission yeast).